A 395-amino-acid chain; its full sequence is 3-sulfinopropanoyl-CoA desulfinase (395 aa).

Residues 121 to 124, Ser130, and 153 to 156 each bind FAD; these read ICIS and YWIT. 243–244 contacts substrate; that stretch reads YN. Residues Arg272, Gln339, Ser343, 366–370, and Gln387 each bind FAD; that span reads GGTAQ.

It belongs to the acyl-CoA dehydrogenase family. Homotrimer or homotetramer. The cofactor is FAD.

It carries out the reaction 3-sulfinopropanoyl-CoA + H2O = propanoyl-CoA + sulfite + H(+). Functionally, catalyzes the conversion 3-sulfinopropanoyl-CoA (3SP-CoA) to propanoyl-CoA by abstraction of sulfite. Does not show dehydrogenase activity. This is 3-sulfinopropanoyl-CoA desulfinase from Cupriavidus necator (strain ATCC 43291 / DSM 13513 / CCUG 52238 / LMG 8453 / N-1) (Ralstonia eutropha).